A 277-amino-acid polypeptide reads, in one-letter code: Undecaprenyl-diphosphatase (277 aa).

The next 5 membrane-spanning stretches (helical) occupy residues 83–103, 109–129, 188–208, 218–238, and 256–276; these read FALNIIIAFLPAALLGLVFAS, LFAPVPVAIAFIVGGFIILWI, ATEFSFFLAIPTLMGATVYSV, ADIPLFGLGGFAAFVSAFLCV, and YRIVFGLFVLLSAYYGWVVWA.

The protein belongs to the UppP family.

The protein resides in the cell inner membrane. It carries out the reaction di-trans,octa-cis-undecaprenyl diphosphate + H2O = di-trans,octa-cis-undecaprenyl phosphate + phosphate + H(+). In terms of biological role, catalyzes the dephosphorylation of undecaprenyl diphosphate (UPP). Confers resistance to bacitracin. The protein is Undecaprenyl-diphosphatase of Janthinobacterium sp. (strain Marseille) (Minibacterium massiliensis).